The chain runs to 146 residues: DNA protection during starvation protein 2 (146 aa).

Fe cation is bound by residues His27, Asp54, and Glu58.

Belongs to the Dps family. As to quaternary structure, the 12 subunits form a hollow sphere into which the mineral iron core of up to 500 Fe(3+) can be deposited. Homododecamer.

The protein resides in the cytoplasm. It catalyses the reaction 2 Fe(2+) + H2O2 + 2 H(+) = 2 Fe(3+) + 2 H2O. In terms of biological role, protects DNA from oxidative damage by sequestering intracellular Fe(2+) ion and storing it in the form of Fe(3+) oxyhydroxide mineral. One hydrogen peroxide oxidizes two Fe(2+) ions, which prevents hydroxyl radical production by the Fenton reaction. It is capable of binding and sequestering Fe(2+) ion. Does not bind DNA. This Bacillus anthracis protein is DNA protection during starvation protein 2 (dps2).